A 364-amino-acid chain; its full sequence is Putative agmatine deiminase (364 aa).

Catalysis depends on Cys-355, which acts as the Amidino-cysteine intermediate.

The protein belongs to the agmatine deiminase family.

The enzyme catalyses agmatine + H2O = N-carbamoylputrescine + NH4(+). This is Putative agmatine deiminase from Mycoplasma mycoides subsp. mycoides SC (strain CCUG 32753 / NCTC 10114 / PG1).